The chain runs to 510 residues: Cytochrome P450 monooxygenase BOT1 (510 aa).

A helical transmembrane segment spans residues 16-36 (PLAWAALILASFTLYSVQLVV). Cys-454 is a heme binding site. Asn-476 is a glycosylation site (N-linked (GlcNAc...) asparagine).

This sequence belongs to the cytochrome P450 family. It depends on heme as a cofactor.

The protein localises to the membrane. The protein operates within secondary metabolite biosynthesis. In terms of biological role, cytochrome P450 monooxygenase; part of the gene cluster that mediates the biosynthesis of botrydial. Botrydial is necessary for colonization of plant tissue by the T4 strain. It is a strain-dependent virulence factor since highly aggressive strains like SAS56 or B05 still retain substantial virulence when botrydial synthesis is impaired, since they produce also botcinic acid. The first step of botrydial biosynthesis is performed by the sesquiterpene synthase BOT2 which catalyzes the cyclization of farnesyl diphosphate (FPP) to presilphiperfolan-8-beta-ol (PSP). The cytochrome P450 monooxygenase BOT4 then catalyzes the hydroxylation at C-4 to give a probotryane intermediate. Acetylation of the hydroxyl at C-4 is carried out by the acetyltransferase BOT5, followed by the combined action of the P450 monooxygenases BOT3 and BOT1, to yield finally the glycol, via the regio- and stereospecific hydroxylations at C-10 and C-15 of the probotryane intermediates, respectively. The cleavage of the C10-C15 bond of probotryane skeleton is an intriguing and chemically important reaction, which could be mediated by some of the monooxygenases or by a combination of them. It is possible that either BOT3 or BOT1 would oxidize either the 10- or the 15-hydroxy group to the hydroperoxide derivative, which would then undergo heterolytic fragmentation to give the dialdehyde botrydial. Finally, the dehydrogenase BOT7 might be involved in the conversion of botrydial to dihydrobotrydial. This is Cytochrome P450 monooxygenase BOT1 from Botryotinia fuckeliana (Noble rot fungus).